A 129-amino-acid chain; its full sequence is MYDNLKSLGINQPEDVDRYSLRQEANNDILKIYFRKDKGEFFAKSVKFKYPRQRKTVVADNAGQGYKEIHEINPNLRYVIDELDQLCQRDQVEVDLKRKILDDLRHLEGVVSHKIAEIESDLEKLTRGK.

It belongs to the UPF0325 family.

The protein is UPF0325 protein Spro_3794 of Serratia proteamaculans (strain 568).